We begin with the raw amino-acid sequence, 312 residues long: Homoserine O-succinyltransferase (312 aa).

Cysteine 142 functions as the Acyl-thioester intermediate in the catalytic mechanism. Residues lysine 163 and serine 192 each contribute to the substrate site. Catalysis depends on histidine 235, which acts as the Proton acceptor. Glutamate 237 is a catalytic residue. Arginine 249 serves as a coordination point for substrate.

Belongs to the MetA family.

Its subcellular location is the cytoplasm. The enzyme catalyses L-homoserine + succinyl-CoA = O-succinyl-L-homoserine + CoA. The protein operates within amino-acid biosynthesis; L-methionine biosynthesis via de novo pathway; O-succinyl-L-homoserine from L-homoserine: step 1/1. In terms of biological role, transfers a succinyl group from succinyl-CoA to L-homoserine, forming succinyl-L-homoserine. This chain is Homoserine O-succinyltransferase, found in Shewanella halifaxensis (strain HAW-EB4).